The following is a 511-amino-acid chain: Frizzled/smoothened-like sans CRD protein C (511 aa).

Positions 1–25 are cleaved as a signal peptide; it reads MNQINKFIKNLYLIIITIILIIVIS. Topologically, residues 26–93 are extracellular; that stretch reads NDNNGLFING…QWESYFEMSL (68 aa). N-linked (GlcNAc...) asparagine glycosylation is present at Asn-51. The helical transmembrane segment at 94 to 114 threads the bilayer; sequence IMGSISMFASLFLIITYSPLI. Over 115-122 the chain is Cytoplasmic; it reads NKKHTRHT. Residues 123–143 traverse the membrane as a helical segment; it reads VGILCMSIGIFFVMVSDGRQL. Over 144–172 the chain is Extracellular; sequence WDIESPGEYKKYCPDTGRYARQSDTKCLT. Residues 173–193 traverse the membrane as a helical segment; that stretch reads TGLFFQFGCVTAIGWWSILAV. Topologically, residues 194–209 are cytoplasmic; sequence DLWMTIAKKVQTTKKQ. A helical membrane pass occupies residues 210 to 230; it reads LLYYLIGINTVSLILTFGPVV. The Extracellular portion of the chain corresponds to 231-253; that stretch reads KNQYGFGNAAIGCWMLDLKYQYG. A helical transmembrane segment spans residues 254–274; sequence FFWIPVGICLSVGSVFIGLIF. Over 275–295 the chain is Cytoplasmic; the sequence is WEIYKISDAVKKRYLKKHIKP. Residues 296–316 form a helical membrane-spanning segment; sequence LCLIVLMCLEFLYMFIYYSYI. Over 317 to 357 the chain is Extracellular; it reads TANQPTYNKHVAEYIMCLIINAANVPGSYTCQLKTVSPTAQ. The helical transmembrane segment at 358–378 threads the bilayer; sequence FLFLIAIRLMGLQGLIFYGLT. The Cytoplasmic portion of the chain corresponds to 379–511; that stretch reads AATKKVWANS…RVNSPDNLQP (133 aa). The interval 430–511 is disordered; it reads NGYTTGGSDN…RVNSPDNLQP (82 aa). Residues 433-443 are compositionally biased toward gly residues; it reads TTGGSDNGVGS. A compositionally biased stretch (polar residues) spans 451-460; it reads KSSSNGGAQD. Residues 461 to 485 are compositionally biased toward low complexity; the sequence is NNNNNNNNNNNNNNNNNNNNNNNNN. Polar residues predominate over residues 486 to 511; sequence SSSLEISGVESNNSTPRVNSPDNLQP.

The protein belongs to the G-protein coupled receptor Fz/Smo family.

The protein localises to the membrane. The protein is Frizzled/smoothened-like sans CRD protein C (fscC) of Dictyostelium discoideum (Social amoeba).